Reading from the N-terminus, the 68-residue chain is Protein DsrB (68 aa).

This sequence belongs to the DsrB family.

This chain is Protein DsrB, found in Sodalis glossinidius (strain morsitans).